The following is a 422-amino-acid chain: Serine hydroxymethyltransferase (422 aa).

(6S)-5,6,7,8-tetrahydrofolate contacts are provided by residues Leu-120 and 124-126; that span reads GHL. Lys-228 carries the post-translational modification N6-(pyridoxal phosphate)lysine.

The protein belongs to the SHMT family. In terms of assembly, homodimer. Pyridoxal 5'-phosphate is required as a cofactor.

The protein resides in the cytoplasm. The enzyme catalyses (6R)-5,10-methylene-5,6,7,8-tetrahydrofolate + glycine + H2O = (6S)-5,6,7,8-tetrahydrofolate + L-serine. It participates in one-carbon metabolism; tetrahydrofolate interconversion. Its pathway is amino-acid biosynthesis; glycine biosynthesis; glycine from L-serine: step 1/1. In terms of biological role, catalyzes the reversible interconversion of serine and glycine with tetrahydrofolate (THF) serving as the one-carbon carrier. This reaction serves as the major source of one-carbon groups required for the biosynthesis of purines, thymidylate, methionine, and other important biomolecules. Also exhibits THF-independent aldolase activity toward beta-hydroxyamino acids, producing glycine and aldehydes, via a retro-aldol mechanism. In Actinobacillus succinogenes (strain ATCC 55618 / DSM 22257 / CCUG 43843 / 130Z), this protein is Serine hydroxymethyltransferase.